Consider the following 298-residue polypeptide: ATP synthase gamma chain (298 aa).

This sequence belongs to the ATPase gamma chain family. In terms of assembly, F-type ATPases have 2 components, CF(1) - the catalytic core - and CF(0) - the membrane proton channel. CF(1) has five subunits: alpha(3), beta(3), gamma(1), delta(1), epsilon(1). CF(0) has three main subunits: a, b and c.

It localises to the cell inner membrane. Functionally, produces ATP from ADP in the presence of a proton gradient across the membrane. The gamma chain is believed to be important in regulating ATPase activity and the flow of protons through the CF(0) complex. This Albidiferax ferrireducens (strain ATCC BAA-621 / DSM 15236 / T118) (Rhodoferax ferrireducens) protein is ATP synthase gamma chain.